The sequence spans 93 residues: Pyrimidine/purine nucleoside phosphorylase (93 aa).

This sequence belongs to the nucleoside phosphorylase PpnP family.

The enzyme catalyses a purine D-ribonucleoside + phosphate = a purine nucleobase + alpha-D-ribose 1-phosphate. It carries out the reaction adenosine + phosphate = alpha-D-ribose 1-phosphate + adenine. It catalyses the reaction cytidine + phosphate = cytosine + alpha-D-ribose 1-phosphate. The catalysed reaction is guanosine + phosphate = alpha-D-ribose 1-phosphate + guanine. The enzyme catalyses inosine + phosphate = alpha-D-ribose 1-phosphate + hypoxanthine. It carries out the reaction thymidine + phosphate = 2-deoxy-alpha-D-ribose 1-phosphate + thymine. It catalyses the reaction uridine + phosphate = alpha-D-ribose 1-phosphate + uracil. The catalysed reaction is xanthosine + phosphate = alpha-D-ribose 1-phosphate + xanthine. Catalyzes the phosphorolysis of diverse nucleosides, yielding D-ribose 1-phosphate and the respective free bases. Can use uridine, adenosine, guanosine, cytidine, thymidine, inosine and xanthosine as substrates. Also catalyzes the reverse reactions. In Pseudomonas syringae pv. tomato (strain ATCC BAA-871 / DC3000), this protein is Pyrimidine/purine nucleoside phosphorylase.